Reading from the N-terminus, the 412-residue chain is Imidazolonepropionase (412 aa).

Positions 76 and 78 each coordinate Fe(3+). 2 residues coordinate Zn(2+): His76 and His78. 4-imidazolone-5-propanoate contacts are provided by Arg85, Tyr148, and His181. Residue Tyr148 participates in N-formimidoyl-L-glutamate binding. His242 contributes to the Fe(3+) binding site. His242 serves as a coordination point for Zn(2+). Glu245 is a binding site for 4-imidazolone-5-propanoate. Position 317 (Asp317) interacts with Fe(3+). Position 317 (Asp317) interacts with Zn(2+). N-formimidoyl-L-glutamate-binding residues include Asn319 and Gly321. A 4-imidazolone-5-propanoate-binding site is contributed by Ser322.

Belongs to the metallo-dependent hydrolases superfamily. HutI family. It depends on Zn(2+) as a cofactor. Fe(3+) serves as cofactor.

It localises to the cytoplasm. It carries out the reaction 4-imidazolone-5-propanoate + H2O = N-formimidoyl-L-glutamate. It participates in amino-acid degradation; L-histidine degradation into L-glutamate; N-formimidoyl-L-glutamate from L-histidine: step 3/3. In terms of biological role, catalyzes the hydrolytic cleavage of the carbon-nitrogen bond in imidazolone-5-propanoate to yield N-formimidoyl-L-glutamate. It is the third step in the universal histidine degradation pathway. This chain is Imidazolonepropionase, found in Staphylococcus aureus (strain USA300 / TCH1516).